A 988-amino-acid polypeptide reads, in one-letter code: MAAQKKYICAFCARAFTRSEHKQRHERSHTNEKPFHCLHCTSSFVRRDLLQRHCRTVHHTNLNPSTLPSNKSLKNPTTNPLDLSNNEGTTTTTKTGNRKNNSNKNGAKNDKSTNPNPAVSNDDNRSSVGDITTQLPFQVQFNTQLPYQQQQQQQQQQQYPILQNQGIPMKQSFSMESDQHSLTTFDSPTSSLGVSMTPSGSTNSEIVLQQQQQTTKRRKRSQENNSNNNTKLIAKELNHDLVHLLSITKKLTTLLQHYDNVKVNITDSFLIGYVHIQQQAKNFTIFEKILKDLVYYLNTYHINNLQQQNQFPPSQQQNHYTINHFKIGISYCVIALGFLIDHKPNRAIQFFKKSWNLLIKTLIPQYNSNNNLLDQIEILYNLFLLCYIYLQFNLETFDINEKQHEHHSYEQGDEHEDHHQEQVYINNQVILNYLNDISFIIASNLKDVATNNLIDHNLNLFWNIYILLSSYITKEPPKIHQILLNKNLKQNDTLVSLMQKFSKSFINMDMDDEQLKLVVVAALNNELKLYFNDTVDEFEPENSKNKRKFIYDNRNVLHNAIILINKSINFYNPSASLVNDAKMFELKLFELFKKNLIINSPMKYHELFNNYIFIPQHYYHWQLLTLTLKEINQNNVIFNQIHSILTTTTGSNVCFSFIDFENLLKNSFLNYKANPIVINNNLLIISYPIIILSNYLNLDNLMTSMGQMNQLQFINLNIFIIEWYLIMMKVLIIIWDDTLIDFEDNYILQTLMYILLDNKSCLLKRLNIDTSKLEYDVNCERLSFNQKWFWIIKLKFDSIFENWMNFLKNKNNNVTNNSNVTNTSTTGITNTNHNHNDSYLHHFNVNVSNFKFNLNKYLNEYFVTGDFKFREQLDQNDPDQFQGSMSMDEEPDFTTAMQTSQTINSFMPIHNHNSRNQVYQQHNQDTPMTSRRDSTNINENNIAQTSSFISNSNYQGSNSNNMINYNEFQDRNYKRSSSITLGILAQTV.

2 consecutive C2H2-type zinc fingers follow at residues 7 to 29 (YICA…ERSH) and 35 to 59 (FHCL…TVHH). Positions 59-83 (HTNLNPSTLPSNKSLKNPTTNPLDL) are enriched in polar residues. Disordered stretches follow at residues 59–129 (HTNL…SSVG) and 174–229 (SMES…SNNN). Residues 84–106 (SNNEGTTTTTKTGNRKNNSNKNG) show a composition bias toward low complexity. 2 stretches are compositionally biased toward polar residues: residues 113 to 129 (TNPN…SSVG) and 174 to 208 (SMES…EIVL).

It localises to the nucleus. Transcription factor required for yeast cell adherence to silicone substrate. The chain is Transcriptional regulator of yeast form adherence 5 (TRY5) from Candida albicans (strain SC5314 / ATCC MYA-2876) (Yeast).